We begin with the raw amino-acid sequence, 599 residues long: Transcription factor COE4 (599 aa).

The interval 64-67 (RKSN) is interaction with DNA. The C5-type zinc-finger motif lies at 152–171 (CRVLLTHEIMCSRCCDRKSC). Interaction with DNA stretches follow at residues 198–205 (NCLKNAGN) and 237–240 (NNSK). One can recognise an IPT/TIG domain in the interval 256–339 (PCIKAISPGE…KGAPGRFVYT (84 aa)). Disordered regions lie at residues 449-473 (GYARSCGSASPRFAPSPGSQQSSYG) and 556-586 (VLRPPSSPSQACPRAHREGLPDQPFEDTDKF). Low complexity predominate over residues 464–473 (SPGSQQSSYG).

Belongs to the COE family. In terms of assembly, forms either a homodimer or a heterodimer with a related family member. In terms of tissue distribution, expressed in the olfactory epithelium, including in both neuronal and basal cell layers. Absent in the vomeronasal organ. Absent from NK cells and CD8(+) T cells.

The protein resides in the nucleus. In terms of biological role, transcription factor. Positively modulates transcription, perhaps less strongly than other early B cell factor/EBF family proteins. Binds an EBF1/Olf-1 consensus site in vitro. The polypeptide is Transcription factor COE4 (Ebf4) (Mus musculus (Mouse)).